Reading from the N-terminus, the 373-residue chain is Glutamine synthetase (373 aa).

N-acetylthreonine is present on T2. The required for glutamine-induced ubiquitination by CRL4(CRBN) and proteasomal degradation stretch occupies residues 2 to 25 (TTSASSHLNKGIKQVYMSLPQGEK). 2 positions are modified to N6-acetyllysine; by EP300: K11 and K14. The 83-residue stretch at 24-106 (EKVQAMYIWI…VLCEVFKYNR (83 aa)) folds into the GS beta-grasp domain. Y104 carries the phosphotyrosine modification. A GS catalytic domain is found at 113 to 373 (LRHTCKRIMD…TGDEPFQYKN (261 aa)). E134 lines the ATP pocket. Positions 134, 136, 196, and 203 each coordinate Mn(2+). Residue 203 to 208 (EFQIGP) coordinates ATP. 246-247 (NW) provides a ligand contact to L-glutamate. Residue H253 coordinates Mn(2+). Residues 255 to 257 (NFS), R319, and R324 contribute to the ATP site. R319 provides a ligand contact to L-glutamate. 336-338 (YFE) lines the ADP pocket. E338 serves as a coordination point for Mn(2+). R340 serves as a coordination point for L-glutamate. S343 is subject to Phosphoserine.

This sequence belongs to the glutamine synthetase family. As to quaternary structure, decamer; composed of two pentamers. Interacts with PALMD. Interacts with RHOJ. Interacts with BEST2; this interaction tethers a fraction of GLUL to the membrane, causing a decrease of cytosolic glutamine synthase (GS) activity and inhibits the chloride channel activity of BEST2 by affecting the gating at the aperture in the absence of intracellular glutamate. Mg(2+) serves as cofactor. It depends on Mn(2+) as a cofactor. In terms of processing, acetylated by EP300/p300; acetylation is stimulated by increased glutamine levels and promotes ubiquitin-mediated proteasomal degradation. Palmitoylated; undergoes autopalmitoylation. Post-translationally, ubiquitinated by ZNRF1. Ubiquitinated by the DCX (DDB1-CUL4-X-box) E3 ubiquitin-protein ligase complex called CRL4(CRBN), leading to proteasomal degradation. Expressed in endothelial cells.

The protein localises to the cytoplasm. It is found in the cytosol. It localises to the microsome. The protein resides in the mitochondrion. Its subcellular location is the cell membrane. It carries out the reaction L-glutamate + NH4(+) + ATP = L-glutamine + ADP + phosphate + H(+). The enzyme catalyses L-cysteinyl-[protein] + hexadecanoyl-CoA = S-hexadecanoyl-L-cysteinyl-[protein] + CoA. Its activity is regulated as follows. Glutamine synthetase activity is inhibited by methionine sulfoximine (MSO). In terms of biological role, glutamine synthetase that catalyzes the ATP-dependent conversion of glutamate and ammonia to glutamine. Its role depends on tissue localization: in the brain, it regulates the levels of toxic ammonia and converts neurotoxic glutamate to harmless glutamine, whereas in the liver, it is one of the enzymes responsible for the removal of ammonia. Plays a key role in ammonium detoxification during erythropoiesis: the glutamine synthetase activity is required to remove ammonium generated by porphobilinogen deaminase (HMBS) during heme biosynthesis to prevent ammonium accumulation and oxidative stress. Essential for proliferation of fetal skin fibroblasts. Independently of its glutamine synthetase activity, required for endothelial cell migration during vascular development: acts by regulating membrane localization and activation of the GTPase RHOJ, possibly by promoting RHOJ palmitoylation. May act as a palmitoyltransferase for RHOJ: able to autopalmitoylate and then transfer the palmitoyl group to RHOJ. Plays a role in ribosomal 40S subunit biogenesis. Through the interaction with BEST2, inhibits BEST2 channel activity by affecting the gating at the aperture in the absence of intracellular L-glutamate, but sensitizes BEST2 to intracellular L-glutamate, which promotes the opening of BEST2 and thus relieves its inhibitory effect on BEST2. The chain is Glutamine synthetase from Homo sapiens (Human).